The primary structure comprises 218 residues: Thiopurine S-methyltransferase (218 aa).

The S-adenosyl-L-methionine site is built by Trp11, Leu46, Glu67, and Arg122.

The protein belongs to the class I-like SAM-binding methyltransferase superfamily. TPMT family.

It localises to the cytoplasm. The enzyme catalyses S-adenosyl-L-methionine + a thiopurine = S-adenosyl-L-homocysteine + a thiopurine S-methylether.. In Vibrio cholerae serotype O1 (strain ATCC 39541 / Classical Ogawa 395 / O395), this protein is Thiopurine S-methyltransferase.